The following is a 290-amino-acid chain: Glycine--tRNA ligase alpha subunit (290 aa).

The protein belongs to the class-II aminoacyl-tRNA synthetase family. In terms of assembly, tetramer of two alpha and two beta subunits.

Its subcellular location is the cytoplasm. The enzyme catalyses tRNA(Gly) + glycine + ATP = glycyl-tRNA(Gly) + AMP + diphosphate. This is Glycine--tRNA ligase alpha subunit from Zymomonas mobilis subsp. mobilis (strain ATCC 31821 / ZM4 / CP4).